Reading from the N-terminus, the 515-residue chain is Folate synthesis bifunctional protein, mitochondrial (515 aa).

The N-terminal 28 residues, 1–28, are a transit peptide targeting the mitochondrion; sequence MSILKCLGVRGNQLCAARNYLKVLGFSS. Residues 47–172 are HPPK; that stretch reads VIALGSNVGD…PFVMAPLMDL (126 aa). The 269-residue stretch at 230–498 folds into the Pterin-binding domain; sequence TLVMGILNLT…NVKDNLDAVK (269 aa). The segment at 232-515 is DHPS; that stretch reads VMGILNLTPD…QKSSPIKFKQ (284 aa). Asparagine 237 is a Mg(2+) binding site. Residues threonine 277, aspartate 314, asparagine 333, aspartate 406, lysine 451, and 486–488 contribute to the (7,8-dihydropterin-6-yl)methyl diphosphate site; that span reads RVH.

In the N-terminal section; belongs to the HPPK family. This sequence in the C-terminal section; belongs to the DHPS family. Homomultimer. The cofactor is Mg(2+).

It is found in the mitochondrion. It carries out the reaction 6-hydroxymethyl-7,8-dihydropterin + ATP = (7,8-dihydropterin-6-yl)methyl diphosphate + AMP + H(+). It catalyses the reaction (7,8-dihydropterin-6-yl)methyl diphosphate + 4-aminobenzoate = 7,8-dihydropteroate + diphosphate. Its pathway is cofactor biosynthesis; tetrahydrofolate biosynthesis; 2-amino-4-hydroxy-6-hydroxymethyl-7,8-dihydropteridine diphosphate from 7,8-dihydroneopterin triphosphate: step 4/4. It participates in cofactor biosynthesis; tetrahydrofolate biosynthesis; 7,8-dihydrofolate from 2-amino-4-hydroxy-6-hydroxymethyl-7,8-dihydropteridine diphosphate and 4-aminobenzoate: step 1/2. In terms of biological role, catalyzes the first two consecutive steps of tetrahydrofolate biosynthesis. This Pisum sativum (Garden pea) protein is Folate synthesis bifunctional protein, mitochondrial.